Consider the following 605-residue polypeptide: MSFLPVTRGEALKRGWDELDIVFVTGDAYVDHPAFGVPLLARWLEFHGFRVGIIPQPDWRSCEPFMALGRPRLFFAVSSGAMDSMVAHYTPARKLRHDDAYTPGNRHGARPNRATIVYTSRLKEAYRDVPVVIGGIEASLRRFAHYDYWEDKVRRSLLLDAKADLLVHGMGERPILELARRVRTGEPFQAIADIRGTAVVLGRGAAPPAGVVELPPFEEVAADRHRYAEAFRLLSREQNPHCAHPLVQRHGDRTLLCNPPAYPLEEAELDSVYALPFQRAPHPSHGEPIPAYEQIRASVTTHRGCFGGCSFCAITHHQGKVIQSRSERSVLAEVERMAAMAWFRGSVSDVGGPTANMYGVHCGNTRGGHACRRESCLYPSPCRYLAVGGERGAALLRAVRGVRGVRNVAVSSGIRYDLMERQPAYFRELVAHHVGGLLKVAPEHMVARVTDLMRKPGKESFDRFLERFRRESARLGKKQYIIPYLMSGHPGCTLDDMVELALFLKRAGLRVEQVQDFTPTPGTLSTCMYHTGLDPFAGAPVHVPRGDREKRLQKALLLWHLPTERRNVLDALRACGRESVARELLGGAAGGGGGRSGSGFRPGRT.

The Radical SAM core domain occupies 291-561; that stretch reads AYEQIRASVT…LQKALLLWHL (271 aa). [4Fe-4S] cluster contacts are provided by cysteine 305, cysteine 309, and cysteine 312. A disordered region spans residues 586-605; the sequence is GGAAGGGGGRSGSGFRPGRT. Residues 587 to 597 show a composition bias toward gly residues; that stretch reads GAAGGGGGRSG.

It belongs to the UPF0313 family. The cofactor is [4Fe-4S] cluster.

The sequence is that of UPF0313 protein GSU2873 from Geobacter sulfurreducens (strain ATCC 51573 / DSM 12127 / PCA).